The sequence spans 275 residues: MTLQQEIIQALGAKPHINPEEEIRRSVDFLKAYLKTYPFLKSLVLGISGGQDSTLAGKLSQMAIAELREETGDNALQFIAVRLPYGAQADEQDCQDAIAFIQPDRVLTVNIKGAVLASEQALREAGIELSDFVRGNEKARERMKAQYSIAGMTHGVVVGTDHAAEAITGFFTKYGDGGTDINPLHRLNKRQGKQLLAALGCPEHLYKKVPTADLEDDRPSLPDEAALGVTYDNIDDYLEGKTLDSAIAKTIEGWYVKTEHKRRLPITVFDDFWKK.

46 to 53 contacts ATP; sequence GISGGQDS. A Mg(2+)-binding site is contributed by Asp-52. Arg-140 contacts deamido-NAD(+). ATP is bound at residue Thr-160. Glu-165 is a binding site for Mg(2+). Positions 173 and 180 each coordinate deamido-NAD(+). ATP-binding residues include Lys-189 and Thr-211. A deamido-NAD(+)-binding site is contributed by 260–261; that stretch reads HK.

The protein belongs to the NAD synthetase family. Homodimer.

It catalyses the reaction deamido-NAD(+) + NH4(+) + ATP = AMP + diphosphate + NAD(+) + H(+). It participates in cofactor biosynthesis; NAD(+) biosynthesis; NAD(+) from deamido-NAD(+) (ammonia route): step 1/1. Functionally, catalyzes the ATP-dependent amidation of deamido-NAD to form NAD. Uses ammonia as a nitrogen source. The sequence is that of NH(3)-dependent NAD(+) synthetase from Salmonella agona (strain SL483).